Reading from the N-terminus, the 247-residue chain is ATP synthase subunit a (247 aa).

A run of 6 helical transmembrane segments spans residues 23-43 (ISFT…TLFL), 90-110 (LFMF…VIGF), 116-136 (VIVT…IGFA), 145-165 (MFFP…IELI), 194-214 (GFVV…FAFL), and 215-235 (SAIT…FTIL).

It belongs to the ATPase A chain family. As to quaternary structure, F-type ATPases have 2 components, CF(1) - the catalytic core - and CF(0) - the membrane proton channel. CF(1) has five subunits: alpha(3), beta(3), gamma(1), delta(1), epsilon(1). CF(0) has three main subunits: a(1), b(2) and c(9-12). The alpha and beta chains form an alternating ring which encloses part of the gamma chain. CF(1) is attached to CF(0) by a central stalk formed by the gamma and epsilon chains, while a peripheral stalk is formed by the delta and b chains.

Its subcellular location is the cell inner membrane. Functionally, key component of the proton channel; it plays a direct role in the translocation of protons across the membrane. This is ATP synthase subunit a from Paramagnetospirillum magneticum (strain ATCC 700264 / AMB-1) (Magnetospirillum magneticum).